The primary structure comprises 761 residues: MRVPLIDFLRFLVLILSLSGASVAADATVKQNFNKYETDSGHAHPPPIYGAPPSYTTPPPPIYSPPIYPPPIQKPPTYSPPIYPPPIQKPPTPTYSPPIYPPPIQKPPTPTYSPPIYPPPIQKPPTPTYSPPIYPPPIQKPPTPSYSPPVKPPPVQMPPTPTYSPPIKPPPVHKPPTPTYSPPIKPPVHKPPTPIYSPPIKPPPVHKPPTPIYSPPIKPPPVHKPPTPTYSPPVKPPPVHKPPTPIYSPPIKPPPVHKPPTPIYSPPVKPPPVQTPPTPIYSPPVKPPPVHKPPTPTYSPPVKSPPVQKPPTPTYSPPIKPPPVQKPPTPTYSPPIKPPPVKPPTPIYSPPVKPPPVHKPPTPIYSPPVKPPPVHKPPTPIYSPPVKPPPIQKPPTPTYSPPIKPPPLQKPPTPTYSPPIKLPPVKPPTPIYSPPVKPPPVHKPPTPIYSPPVKPPPVHKPPTPTYSPPIKPPPVKPPTPTYSPPVQPPPVQKPPTPTYSPPVKPPPIQKPPTPTYSPPIKPPPVKPPTPTYSPPIKPPPVHKPPTPTYSPPIKPPPIHKPPTPTYSPPIKPPPVHKPPTPTYSPPIKPPPVHKPPTPTYSPPIKPPPVHKPPTPTYSPPIKPPPVHKPPTPTYSPPIKPPPVHKPPTPTYSPPIKPPPVQKPPTPTYSPPVKPPPVQLPPTPTYSPPVKPPPVQVPPTPTYSPPVKPPPVQVPPTPTYSPPIKPPPVQVPPTPTTPSPPQGGYGTPPPYAYLSHPIDIRN.

Residues 1 to 24 (MRVPLIDFLRFLVLILSLSGASVA) form the signal peptide. Residues 63–77 (YSPPIYPPPIQKPPT) form a 1; degenerate repeat. Positions 63-735 (YSPPIYPPPI…PPVQVPPTPT (673 aa)) are 40 X 17 AA approximate tandem repeats of Y-S-P-P-[IV]-[KY]-P-P-P-x(1,2)-K-P-P-T-P-T. 39 tandem repeats follow at residues 78-94 (YSPP…PTPT), 95-111 (YSPP…PTPT), 112-128 (YSPP…PTPT), 129-145 (YSPP…PTPS), 146-162 (YSPP…PTPT), 163-179 (YSPP…PTPT), 180-195 (YSPP…PTPI), 196-212 (YSPP…PTPI), 213-229 (YSPP…PTPT), 230-246 (YSPP…PTPI), 247-263 (YSPP…PTPI), 264-280 (YSPP…PTPI), 281-297 (YSPP…PTPT), 298-314 (YSPP…PTPT), 315-331 (YSPP…PTPT), 332-347 (YSPP…PTPI), 348-364 (YSPP…PTPI), 365-381 (YSPP…PTPI), 382-398 (YSPP…PTPT), 399-415 (YSPP…PTPT), 416-431 (YSPP…PTPI), 432-448 (YSPP…PTPI), 449-465 (YSPP…PTPT), 466-481 (YSPP…PTPT), 482-498 (YSPP…PTPT), 499-515 (YSPP…PTPT), 516-531 (YSPP…PTPT), 532-548 (YSPP…PTPT), 549-565 (YSPP…PTPT), 566-582 (YSPP…PTPT), 583-599 (YSPP…PTPT), 600-616 (YSPP…PTPT), 617-633 (YSPP…PTPT), 634-650 (YSPP…PTPT), 651-667 (YSPP…PTPT), 668-684 (YSPP…PTPT), 685-701 (YSPP…PTPT), 702-718 (YSPP…PTPT), and 719-735 (YSPP…PTPT). Over residues 111–750 (TYSPPIYPPP…QGGYGTPPPY (640 aa)) the composition is skewed to pro residues. The tract at residues 111-761 (TYSPPIYPPP…YLSHPIDIRN (651 aa)) is disordered.

It belongs to the extensin family. In terms of tissue distribution, specifically expressed in endosperm during seed germination, at the site of radicle protrusion.

It localises to the secreted. The protein localises to the primary cell wall. Its function is as follows. May have a specific role in modifying the cell-wall structure, specifically during seed germination, thus facilitating radicle protrusion. The sequence is that of Proline-rich extensin-like protein EPR1 (EPR1) from Arabidopsis thaliana (Mouse-ear cress).